The chain runs to 156 residues: ATP synthase subunit b (156 aa).

Residues 7–29 (LLGQAISFLLFVWFCMKFVWPPL) traverse the membrane as a helical segment.

Belongs to the ATPase B chain family. In terms of assembly, F-type ATPases have 2 components, F(1) - the catalytic core - and F(0) - the membrane proton channel. F(1) has five subunits: alpha(3), beta(3), gamma(1), delta(1), epsilon(1). F(0) has three main subunits: a(1), b(2) and c(10-14). The alpha and beta chains form an alternating ring which encloses part of the gamma chain. F(1) is attached to F(0) by a central stalk formed by the gamma and epsilon chains, while a peripheral stalk is formed by the delta and b chains.

It localises to the cell inner membrane. F(1)F(0) ATP synthase produces ATP from ADP in the presence of a proton or sodium gradient. F-type ATPases consist of two structural domains, F(1) containing the extramembraneous catalytic core and F(0) containing the membrane proton channel, linked together by a central stalk and a peripheral stalk. During catalysis, ATP synthesis in the catalytic domain of F(1) is coupled via a rotary mechanism of the central stalk subunits to proton translocation. In terms of biological role, component of the F(0) channel, it forms part of the peripheral stalk, linking F(1) to F(0). This is ATP synthase subunit b from Shewanella pealeana (strain ATCC 700345 / ANG-SQ1).